The sequence spans 86 residues: MAEERNFRKVRRGYVVSDKMDKTISVELEQRSTHPLYGKVVRSTRTVKVHDEHNEAHIGDLVSIMETRPLSKTKRWRLDSIIERAK.

It belongs to the universal ribosomal protein uS17 family. In terms of assembly, part of the 30S ribosomal subunit.

One of the primary rRNA binding proteins, it binds specifically to the 5'-end of 16S ribosomal RNA. The sequence is that of Small ribosomal subunit protein uS17 from Bifidobacterium adolescentis (strain ATCC 15703 / DSM 20083 / NCTC 11814 / E194a).